We begin with the raw amino-acid sequence, 350 residues long: Ribosomal RNA large subunit methyltransferase M (350 aa).

S-adenosyl-L-methionine contacts are provided by residues 217 to 220, D236, D256, and D272; that span reads APGG. K301 functions as the Proton acceptor in the catalytic mechanism.

The protein belongs to the class I-like SAM-binding methyltransferase superfamily. RNA methyltransferase RlmE family. RlmM subfamily. In terms of assembly, monomer.

The protein localises to the cytoplasm. The catalysed reaction is cytidine(2498) in 23S rRNA + S-adenosyl-L-methionine = 2'-O-methylcytidine(2498) in 23S rRNA + S-adenosyl-L-homocysteine + H(+). Catalyzes the 2'-O-methylation at nucleotide C2498 in 23S rRNA. The protein is Ribosomal RNA large subunit methyltransferase M of Cellvibrio japonicus (strain Ueda107) (Pseudomonas fluorescens subsp. cellulosa).